A 412-amino-acid chain; its full sequence is MRTYVVGGAVRDALLGLPVKDRDWVVVGATPDEMLARGFRPVGKDFPVFLHPQTQEEHALARTERKTGRGYAGFAFHTAPDVTLEEDLARRDLTINAIARDADGTLIDPYGGVADLHGRVFRHVSPAFAEDPVRILRVARFAARFADFSVAPETLALMRAMVDNGEVDHLVAERVWQEFARGLMEAHPARMIRVLRDCGALARLLPELDRLFGVPQPAQHHPEIDTGEHVLMVVEQAAARAHSLPVRWATLLHDLGKGETPAAILPHHYGHEARSADLARQVSERLKAPVDCRDLAVMVAREHGILAQAAVLRAETMVKVLERCDALRRPERFALMLEAAACDHLGRGGERPENWAPAAQWQAALAAVRSVEAGAIARACADKAQVPQRIHAARVAAVKALRAHPPPAEGIS.

The ATP site is built by G8 and R11. 2 residues coordinate CTP: G8 and R11. Mg(2+) is bound by residues D21 and D23. 3 residues coordinate ATP: R91, R137, and R140. The CTP site is built by R91, R137, and R140. Residues 226-327 (TGEHVLMVVE…VKVLERCDAL (102 aa)) enclose the HD domain.

It belongs to the tRNA nucleotidyltransferase/poly(A) polymerase family. Bacterial CCA-adding enzyme type 1 subfamily. In terms of assembly, monomer. Can also form homodimers and oligomers. Mg(2+) serves as cofactor. Ni(2+) is required as a cofactor.

The enzyme catalyses a tRNA precursor + 2 CTP + ATP = a tRNA with a 3' CCA end + 3 diphosphate. The catalysed reaction is a tRNA with a 3' CCA end + 2 CTP + ATP = a tRNA with a 3' CCACCA end + 3 diphosphate. Its function is as follows. Catalyzes the addition and repair of the essential 3'-terminal CCA sequence in tRNAs without using a nucleic acid template. Adds these three nucleotides in the order of C, C, and A to the tRNA nucleotide-73, using CTP and ATP as substrates and producing inorganic pyrophosphate. tRNA 3'-terminal CCA addition is required both for tRNA processing and repair. Also involved in tRNA surveillance by mediating tandem CCA addition to generate a CCACCA at the 3' terminus of unstable tRNAs. While stable tRNAs receive only 3'-terminal CCA, unstable tRNAs are marked with CCACCA and rapidly degraded. This chain is Multifunctional CCA protein, found in Azoarcus sp. (strain BH72).